The primary structure comprises 269 residues: tRNA uridine(34) hydroxylase (269 aa).

One can recognise a Rhodanese domain in the interval 121-214 (SQPDVLVIDT…YLERTHNKNG (94 aa)). Cys174 serves as the catalytic Cysteine persulfide intermediate.

The protein belongs to the TrhO family.

The catalysed reaction is uridine(34) in tRNA + AH2 + O2 = 5-hydroxyuridine(34) in tRNA + A + H2O. Catalyzes oxygen-dependent 5-hydroxyuridine (ho5U) modification at position 34 in tRNAs. This is tRNA uridine(34) hydroxylase from Wolbachia sp. subsp. Brugia malayi (strain TRS).